Reading from the N-terminus, the 164-residue chain is Histone H1 (164 aa).

The segment covering 1–10 has biased composition (polar residues); it reads MAPRSSTSKS. Residues 1-164 form a disordered region; sequence MAPRSSTSKS…KKSSKPAKKN (164 aa). Positions 16 to 27 are enriched in basic residues; the sequence is KDHKKAPIKKAI. A phosphothreonine mark is found at T47 and T54. 3 stretches are compositionally biased toward basic and acidic residues: residues 49-61, 69-89, and 117-156; these read VKKDVTPVKADTK, TMKETVSDAKKTVHAAAGDKK, and TKKEVKKDNKTAKKETKKDHKPAKKEAKKETKPAKKDAKK.

In terms of processing, cell-growth/division-associated phosphorylation by a CDC2-like kinase.

Its subcellular location is the nucleus. The protein localises to the chromosome. Functionally, histones H1 are necessary for the condensation of nucleosome chains into higher-order structures. The sequence is that of Histone H1 (HHO) from Tetrahymena thermophila (strain SB210).